Here is a 122-residue protein sequence, read N- to C-terminus: Large ribosomal subunit protein uL14 (122 aa).

Belongs to the universal ribosomal protein uL14 family. As to quaternary structure, part of the 50S ribosomal subunit. Forms a cluster with proteins L3 and L19. In the 70S ribosome, L14 and L19 interact and together make contacts with the 16S rRNA in bridges B5 and B8.

In terms of biological role, binds to 23S rRNA. Forms part of two intersubunit bridges in the 70S ribosome. The sequence is that of Large ribosomal subunit protein uL14 from Shouchella clausii (strain KSM-K16) (Alkalihalobacillus clausii).